Reading from the N-terminus, the 581-residue chain is Sodium/hydrogen exchanger 8 (581 aa).

Transmembrane regions (helical) follow at residues 60–80 (MTIF…HLLI), 84–104 (LHFL…GAVI), 123–143 (PNMF…YSLH), 156–176 (LFAV…IYFL), 191–211 (FAFG…IFNA), 264–284 (FLKM…ISAL), 311–331 (GLAE…GIVM), 354–374 (VAFL…FSFP), 379–399 (ISFV…NIFP), 417–437 (MFIM…SLHL), and 451–471 (TTIV…MPLI). Residue threonine 510 is modified to Phosphothreonine. Phosphoserine occurs at positions 571 and 573.

It belongs to the monovalent cation:proton antiporter 1 (CPA1) transporter (TC 2.A.36) family. Ubiquitous. Strongly expressed in skeletal muscle and kidney. Detected throughout the entire gastrointestinal tract, with high expression detected in stomach, duodenum and ascending colon.

It is found in the golgi apparatus membrane. It localises to the golgi apparatus. The protein localises to the trans-Golgi network membrane. Its subcellular location is the endosome. The protein resides in the multivesicular body membrane. It is found in the apical cell membrane. It localises to the cytoplasmic vesicle. The protein localises to the secretory vesicle. Its subcellular location is the acrosome. It catalyses the reaction Na(+)(in) + H(+)(out) = Na(+)(out) + H(+)(in). HOE642 inhibits SLC9A8 activity. Na(+)/H(+) antiporter. Mediates the electoneutral exchange of intracellular H(+) ions for extracellular Na(+) in 1:1 stoichiometry. Acts as an Na(+)/H(+) exchanger in the trans-Golgi. Contributes to the regulation of pH regulation of Golgi apparatus, and consequently, in protein trafficking and endosomal morphology. In germ cells, plays a crucial role in acrosome biogenesis and sperm development, probably by playing a role in the fusion of the Golgi-derived vesicles that form the acrosomal cap. Can also be active at the cell surface of specialized cells. In the small intestine, at the cell membrane, plays a major physiological role in transepithelial absorption of Na(+) and regulates intracellular pH homeostasis of intestinal epithelial cells. Acts as an important regulator of mucosal integrity in the intestine and in the stomach, could mediate the pH fluctuation necessary for mucin exocytosis or assist membrane trafficking of other proteins. Plays a role in photoreceptor survival and in the maintenance of intracellular pH homeostasis in retinal pigment epithelium (RPE cells). This Homo sapiens (Human) protein is Sodium/hydrogen exchanger 8.